The primary structure comprises 463 residues: Casein kinase 1 (463 aa).

A Protein kinase domain is found at 9–278 (FKLGRKIGSG…LKRLFRDLFI (270 aa)). Residues 15 to 23 (IGSGSFGEL) and lysine 38 contribute to the ATP site. The active-site Proton acceptor is aspartate 128. Residues 296–306 (ESNRLRSSGRT) show a composition bias toward polar residues. Positions 296–448 (ESNRLRSSGR…TARNVHDDPT (153 aa)) are disordered. Positions 315–328 (ERTERAAARQDVPD) are enriched in basic and acidic residues. 2 stretches are compositionally biased toward polar residues: residues 376 to 396 (TSSS…SRPS) and 404 to 440 (NRSN…TKTA).

The protein belongs to the protein kinase superfamily. CK1 Ser/Thr protein kinase family. Casein kinase I subfamily. Monomer. Autophosphorylated. In terms of tissue distribution, expressed in leaves, stems, panicles and seeds. Expressed in root tissues and lamina joints.

It is found in the cytoplasm. The protein localises to the nucleus. It carries out the reaction L-seryl-[protein] + ATP = O-phospho-L-seryl-[protein] + ADP + H(+). The enzyme catalyses L-threonyl-[protein] + ATP = O-phospho-L-threonyl-[protein] + ADP + H(+). Its activity is regulated as follows. Inhibited by N-(2-aminoethyl)-5-chloroisoquinoline-8-sulfonamide (CKI-7). Functionally, casein kinases are operationally defined by their preferential utilization of acidic proteins such as caseins as substrates. Can phosphorylate casein in vitro. Required for normal root development through modulation of cell elongation. Plants silencing CKI1 show abnormal root development, with reduced number of lateral and adventitious roots, and shortened primary roots as a result of reduced cell elongation. May be involved in abscisic acid (ABA) and brassinosteroid (BR) signaling pathways. Plays an important role in the adaptive growth and fitness under low temperature (LT) conditions. May confer tolerance to LT through an auxin-dependent process. This chain is Casein kinase 1 (CKI1), found in Oryza sativa subsp. japonica (Rice).